We begin with the raw amino-acid sequence, 259 residues long: MLPLNATITQIIEESPLIRTFFFDHKFEDMEPGQFVMVWVRGVDEVPMGLSRNNSITVQKVGEATSKLFELKEGDSFGLRGPFGKGFTLPAKGEKVLIIAGGVGAAPLSPYAEAAFAAGAEVNTVLGARSEEHLLFEGRFEALGTVYVSTDDGSKGFKGFVTDVLKNLDVTSYDRIAVCGPEIMMASVFRFLEEREVLEKSEFSLHRYFKCGIGVCGACCIDRSGLRVCKDGPVFSGTQLIGSELGKYSRDASGRRVKI.

The FAD-binding FR-type domain occupies 1–89; that stretch reads MLPLNATITQ…RGPFGKGFTL (89 aa). Cys211, Cys216, Cys219, and Cys229 together coordinate [2Fe-2S] cluster.

The protein belongs to the PyrK family. As to quaternary structure, heterotetramer of 2 PyrK and 2 PyrD type B subunits. It depends on [2Fe-2S] cluster as a cofactor. FAD serves as cofactor.

It functions in the pathway pyrimidine metabolism; UMP biosynthesis via de novo pathway; orotate from (S)-dihydroorotate (NAD(+) route): step 1/1. Responsible for channeling the electrons from the oxidation of dihydroorotate from the FMN redox center in the PyrD type B subunit to the ultimate electron acceptor NAD(+). This is Probable dihydroorotate dehydrogenase B (NAD(+)), electron transfer subunit from Methanosarcina mazei (strain ATCC BAA-159 / DSM 3647 / Goe1 / Go1 / JCM 11833 / OCM 88) (Methanosarcina frisia).